The chain runs to 344 residues: Phenylalanine--tRNA ligase alpha subunit (344 aa).

Residue Glu-255 coordinates Mg(2+).

Belongs to the class-II aminoacyl-tRNA synthetase family. Phe-tRNA synthetase alpha subunit type 1 subfamily. In terms of assembly, tetramer of two alpha and two beta subunits. Requires Mg(2+) as cofactor.

Its subcellular location is the cytoplasm. It catalyses the reaction tRNA(Phe) + L-phenylalanine + ATP = L-phenylalanyl-tRNA(Phe) + AMP + diphosphate + H(+). This Phocaeicola vulgatus (strain ATCC 8482 / DSM 1447 / JCM 5826 / CCUG 4940 / NBRC 14291 / NCTC 11154) (Bacteroides vulgatus) protein is Phenylalanine--tRNA ligase alpha subunit.